A 1128-amino-acid chain; its full sequence is Scavenger receptor cysteine-rich domain superfamily protein (1128 aa).

An N-terminal signal peptide occupies residues 1 to 24 (MTSLRRGNICWVAVCAALLTLTRG). The Extracellular portion of the chain corresponds to 25–1051 (IDVIAKPSRT…VGAQAGPAGG (1027 aa)). SRCR domains are found at residues 40-140 (VQLV…VVCN), 143-245 (VRLA…VICT), 248-348 (IRLV…VICT), 351-450 (VRLV…AKCQ), 453-553 (VQLV…VVCR), 555-654 (IRLA…VVCR), 657-757 (LRLA…VVCT), 759-866 (LRLT…VLCK), and 868-968 (IRLV…VQCK). 21 disulfides stabilise this stretch: C65–C129, C78–C139, C109–C119, C168–C234, C181–C244, C212–C222, C273–C337, C286–C347, C316–C326, C376–C439, C389–C449, C419–C429, C478–C542, C491–C552, C522–C532, C583–C644, C596–C653, C624–C634, C682–C746, C695–C756, and C726–C736. N87 carries an N-linked (GlcNAc...) asparagine glycan. N-linked (GlcNAc...) asparagine glycans are attached at residues N190 and N194. N229 carries N-linked (GlcNAc...) asparagine glycosylation. N-linked (GlcNAc...) asparagine glycosylation is present at N422. Residues N601 and N612 are each glycosylated (N-linked (GlcNAc...) asparagine). N765, N808, N834, and N936 each carry an N-linked (GlcNAc...) asparagine glycan. Disulfide bonds link C803/C865, C833/C843, C906/C967, C937/C947, C971/C1013, and C999/C1026. Residues 969–1028 (AGCDWPGPIRHGSFSPNRSSYDPLTTIDVKCDAGYELMGSKTLQCVTGCDWSRPTPECQR) form the Sushi domain. N985 carries an N-linked (GlcNAc...) asparagine glycan. Residue N1031 is glycosylated (N-linked (GlcNAc...) asparagine). The chain crosses the membrane as a helical span at residues 1052–1072 (VMLIIGIILGAVVMMLIACVA). Topologically, residues 1073-1128 (LYLKGRNKNIGRGNPATTSAIWKPKKEFDELKEPVLSFSAMTAGGAGPEDGMGEDI) are cytoplasmic.

In terms of tissue distribution, from the mid-gastrula stage, expressed only in mesenchyme cells that are migrating toward the body wall. At the brachiolaria stage, expressed in presumptive coelomocytes of the coelomic pouch. Also expressed in adult coelomocytes (at protein level).

The protein localises to the cytoplasmic vesicle membrane. In terms of biological role, involved in aggregate formation and phagocytosis by larval mesenchyme cells and adult coelomocytes. Binds to bacteria and may act as an opsonin in the innate immune system. The sequence is that of Scavenger receptor cysteine-rich domain superfamily protein from Patiria pectinifera (Starfish).